The following is a 265-amino-acid chain: MTLDLASALNDLQTKKPLVHHITNAVTINDCANITLCIGAAPVMAEAPEEVAEMVAMAGALVLNIGTLSKSQISAMLIAGRAANDLEVPVILDPVGAGATMLRTESARRLLTELQVAVVKGNAGEIGLLAGAAGRVRGVDSAGLDGDPVAVCKSLVNAYSCTVAMSGATDIVTDGDRVVLIDNGDPRMGVVSGTGCMASSLTGAFAAGSRDQVCSTAAALAAFGLAGEKAAKRAFGPSSFKVALMDEVAALTPPVLSAGAKIRIL.

Met-44 contacts substrate. Positions 120 and 166 each coordinate ATP. Gly-193 serves as a coordination point for substrate.

Belongs to the Thz kinase family. The cofactor is Mg(2+).

It catalyses the reaction 5-(2-hydroxyethyl)-4-methylthiazole + ATP = 4-methyl-5-(2-phosphooxyethyl)-thiazole + ADP + H(+). The protein operates within cofactor biosynthesis; thiamine diphosphate biosynthesis; 4-methyl-5-(2-phosphoethyl)-thiazole from 5-(2-hydroxyethyl)-4-methylthiazole: step 1/1. Catalyzes the phosphorylation of the hydroxyl group of 4-methyl-5-beta-hydroxyethylthiazole (THZ). The protein is Hydroxyethylthiazole kinase of Methanosphaerula palustris (strain ATCC BAA-1556 / DSM 19958 / E1-9c).